A 264-amino-acid chain; its full sequence is Thymidylate synthase (264 aa).

Arg-21 contacts dUMP. His-51 is a binding site for (6R)-5,10-methylene-5,6,7,8-tetrahydrofolate. Position 126-127 (126-127) interacts with dUMP; the sequence is RR. The Nucleophile role is filled by Cys-146. DUMP is bound by residues 166–169, Asn-177, and 207–209; these read RSCD and HLY. A (6R)-5,10-methylene-5,6,7,8-tetrahydrofolate-binding site is contributed by Asp-169. Residue Ala-263 participates in (6R)-5,10-methylene-5,6,7,8-tetrahydrofolate binding.

It belongs to the thymidylate synthase family. Bacterial-type ThyA subfamily. Homodimer.

The protein localises to the cytoplasm. It catalyses the reaction dUMP + (6R)-5,10-methylene-5,6,7,8-tetrahydrofolate = 7,8-dihydrofolate + dTMP. It functions in the pathway pyrimidine metabolism; dTTP biosynthesis. Functionally, catalyzes the reductive methylation of 2'-deoxyuridine-5'-monophosphate (dUMP) to 2'-deoxythymidine-5'-monophosphate (dTMP) while utilizing 5,10-methylenetetrahydrofolate (mTHF) as the methyl donor and reductant in the reaction, yielding dihydrofolate (DHF) as a by-product. This enzymatic reaction provides an intracellular de novo source of dTMP, an essential precursor for DNA biosynthesis. This Klebsiella pneumoniae subsp. pneumoniae (strain ATCC 700721 / MGH 78578) protein is Thymidylate synthase.